The sequence spans 805 residues: Phenylalanine--tRNA ligase beta subunit (805 aa).

Positions 39–155 (VKVLGAFRIC…EDAPMGMRFI (117 aa)) constitute a tRNA-binding domain. In terms of domain architecture, B5 spans 408-479 (DTSRAYRFDP…RVASLTKLQG (72 aa)). Positions 457, 463, 466, and 467 each coordinate Mg(2+). Residues 707–804 (SDLQAVERDF…VAKATGATLR (98 aa)) form the FDX-ACB domain.

The protein belongs to the phenylalanyl-tRNA synthetase beta subunit family. Type 1 subfamily. In terms of assembly, tetramer of two alpha and two beta subunits. Mg(2+) serves as cofactor.

It is found in the cytoplasm. The catalysed reaction is tRNA(Phe) + L-phenylalanine + ATP = L-phenylalanyl-tRNA(Phe) + AMP + diphosphate + H(+). The polypeptide is Phenylalanine--tRNA ligase beta subunit (Cereibacter sphaeroides (strain ATCC 17023 / DSM 158 / JCM 6121 / CCUG 31486 / LMG 2827 / NBRC 12203 / NCIMB 8253 / ATH 2.4.1.) (Rhodobacter sphaeroides)).